A 68-amino-acid polypeptide reads, in one-letter code: MCAVAYRRSLHYDSWCSKEKTPSNHRVNCLLDPKLLLESPEKLGCYCIDHCNLHLKGQIVWTAPDGGD.

In Pantherophis guttatus (Corn snake), this protein is Protein RH1.